The sequence spans 150 residues: Actin-depolymerizing factor 3 (150 aa).

The 144-residue stretch at 7-150 (GVAVSEECKA…TLDVLKDHTS (144 aa)) folds into the ADF-H domain.

Belongs to the actin-binding proteins ADF family.

Functionally, actin-depolymerizing protein. Severs actin filaments (F-actin) and binds to actin monomers. The sequence is that of Actin-depolymerizing factor 3 (ADF3) from Oryza sativa subsp. japonica (Rice).